A 306-amino-acid chain; its full sequence is Homoserine kinase (306 aa).

90 to 100 (PLARGLGSSAS) lines the ATP pocket.

This sequence belongs to the GHMP kinase family. Homoserine kinase subfamily.

The protein resides in the cytoplasm. It catalyses the reaction L-homoserine + ATP = O-phospho-L-homoserine + ADP + H(+). The protein operates within amino-acid biosynthesis; L-threonine biosynthesis; L-threonine from L-aspartate: step 4/5. Its function is as follows. Catalyzes the ATP-dependent phosphorylation of L-homoserine to L-homoserine phosphate. In Staphylococcus epidermidis (strain ATCC 35984 / DSM 28319 / BCRC 17069 / CCUG 31568 / BM 3577 / RP62A), this protein is Homoserine kinase.